The sequence spans 259 residues: Putative protein phosphatase (259 aa).

Residues 8–255 (LFASLSKKGP…DNITLNLINL (248 aa)) enclose the PPM-type phosphatase domain.

The catalysed reaction is O-phospho-L-seryl-[protein] + H2O = L-seryl-[protein] + phosphate. It catalyses the reaction O-phospho-L-threonyl-[protein] + H2O = L-threonyl-[protein] + phosphate. The protein is Putative protein phosphatase of Mycoplasma pneumoniae (strain ATCC 29342 / M129 / Subtype 1) (Mycoplasmoides pneumoniae).